The chain runs to 322 residues: Lignin-forming anionic peroxidase (322 aa).

Residues 1-27 (MNTPTQSFRAKAAIFSLLLLSCMQCHA) form the signal peptide. Position 28 is a pyrrolidone carboxylic acid (Gln-28). 4 disulfide bridges follow: Cys-38–Cys-118, Cys-71–Cys-76, Cys-124–Cys-318, and Cys-203–Cys-229. The active-site Proton acceptor is His-69. Positions 70, 73, 75, 77, and 79 each coordinate Ca(2+). Residue Pro-166 participates in substrate binding. His-196 is a heme b binding site. Residue Thr-197 participates in Ca(2+) binding. The N-linked (GlcNAc...) asparagine glycan is linked to Asn-213. Positions 242, 245, and 250 each coordinate Ca(2+).

The protein belongs to the peroxidase family. Classical plant (class III) peroxidase subfamily. Ca(2+) is required as a cofactor. Requires heme b as cofactor. In terms of tissue distribution, mesophyll protoplasts and to a much lesser extent, roots and germinating seeds.

The protein resides in the secreted. The catalysed reaction is 2 a phenolic donor + H2O2 = 2 a phenolic radical donor + 2 H2O. In terms of biological role, removal of H(2)O(2), oxidation of toxic reductants, biosynthesis and degradation of lignin, suberization, auxin catabolism, response to environmental stresses such as wounding, pathogen attack and oxidative stress. These functions might be dependent on each isozyme/isoform in each plant tissue. Plays an integral role in secondary cell wall biosynthesis by the polymerization of cinnamyl alcohols into lignin and by forming rigid cross-links between cellulose, pectin, hydroxy-proline-rich glycoproteins, and lignin. This chain is Lignin-forming anionic peroxidase, found in Nicotiana sylvestris (Wood tobacco).